A 455-amino-acid polypeptide reads, in one-letter code: SUN domain-containing protein 2 (455 aa).

The segment covering 1 to 12 (MSASTVSITASP) has biased composition (polar residues). Residues 1 to 99 (MSASTVSITA…RTRKSQGNKI (99 aa)) form a disordered region. Serine 2 bears the N-acetylserine mark. The Nuclear segment spans residues 2–105 (SASTVSITAS…GNKIDRGKWK (104 aa)). Residue serine 63 is modified to Phosphoserine. A compositionally biased stretch (low complexity) spans 74–88 (KSGSTATGTNTTTTQ). The Nuclear localization signal motif lies at 88–95 (QRRTRKSQ). A helical transmembrane segment spans residues 106 to 128 (TVVRVFAKQFGALLLLVGLIQLI). The Perinuclear space portion of the chain corresponds to 129-455 (RKLTLKDSSL…ELDSVSVAHA (327 aa)). Residues 201 to 225 (LHSELKKVESKTERLQVSVDELNAK) adopt a coiled-coil conformation. The region spanning 285–447 (GGAFVMGHSD…YRFRVHGREL (163 aa)) is the SUN domain.

In terms of assembly, forms homomers (e.g. dimers, trimers and tetramers) and heteromers with SUN1. Interacts with SUN3, SUN4 and TIK. Core component of the LINC complex which is composed of inner nuclear membrane SUN domain-containing proteins coupled to outer nuclear membrane WIP and WIT proteins. The LINC complex also involves nucleoskeletal proteins CRWN/LINC and possibly KAKU4 and the cytoskeletal myosin KAKU1. Interacts with LINC1, WIP1, WIP2 and WIP3 at the nuclear envelope (NE). Interacts with SINE1, SINE2, SINE3 and SINE4. Interacts with NEAP1, NEA2 and NEAP3. Expressed in roots, hypocotyls, cotyledons and leaves and inflorescences.

It is found in the nucleus inner membrane. Its subcellular location is the cytoplasm. The protein resides in the cytoskeleton. It localises to the phragmoplast. The protein localises to the endoplasmic reticulum membrane. It is found in the nucleus envelope. Functionally, component of SUN-protein-containing multivariate complexes also called LINC complexes which link the nucleoskeleton and cytoskeleton by providing versatile outer nuclear membrane attachment sites for cytoskeletal filaments. Required for the maintenance and/or formation of polarized nuclear shape in root hairs. Modulates the anchoring and mobility of WIP proteins in the nuclear envelope (NE). In association with SUN1, may be involved in telomere attachment to nuclear envelope in the prophase of meiosis. As component of the SUN-WIP-WIT2-KAKU1 complex, mediates the transfer of cytoplasmic forces to the nuclear envelope (NE), leading to nuclear shape changes. The sequence is that of SUN domain-containing protein 2 from Arabidopsis thaliana (Mouse-ear cress).